The primary structure comprises 281 residues: Pantothenate synthetase (281 aa).

Position 30-37 (30-37 (MGYLHEGH)) interacts with ATP. The active-site Proton donor is the histidine 37. Glutamine 61 is a binding site for (R)-pantoate. Residue glutamine 61 coordinates beta-alanine. Position 147-150 (147-150 (GQKD)) interacts with ATP. Glutamine 153 is a (R)-pantoate binding site. ATP-binding positions include valine 176 and 184 to 187 (MSSR).

It belongs to the pantothenate synthetase family. Homodimer.

It is found in the cytoplasm. It catalyses the reaction (R)-pantoate + beta-alanine + ATP = (R)-pantothenate + AMP + diphosphate + H(+). It functions in the pathway cofactor biosynthesis; (R)-pantothenate biosynthesis; (R)-pantothenate from (R)-pantoate and beta-alanine: step 1/1. Its function is as follows. Catalyzes the condensation of pantoate with beta-alanine in an ATP-dependent reaction via a pantoyl-adenylate intermediate. The chain is Pantothenate synthetase from Acetivibrio thermocellus (strain ATCC 27405 / DSM 1237 / JCM 9322 / NBRC 103400 / NCIMB 10682 / NRRL B-4536 / VPI 7372) (Clostridium thermocellum).